Consider the following 217-residue polypeptide: Methylthioribulose-1-phosphate dehydratase (217 aa).

The Zn(2+) site is built by His-106 and His-108.

Belongs to the aldolase class II family. MtnB subfamily. It depends on Zn(2+) as a cofactor.

It catalyses the reaction 5-(methylsulfanyl)-D-ribulose 1-phosphate = 5-methylsulfanyl-2,3-dioxopentyl phosphate + H2O. The protein operates within amino-acid biosynthesis; L-methionine biosynthesis via salvage pathway; L-methionine from S-methyl-5-thio-alpha-D-ribose 1-phosphate: step 2/6. In terms of biological role, catalyzes the dehydration of methylthioribulose-1-phosphate (MTRu-1-P) into 2,3-diketo-5-methylthiopentyl-1-phosphate (DK-MTP-1-P). The polypeptide is Methylthioribulose-1-phosphate dehydratase (Xanthomonas campestris pv. campestris (strain 8004)).